A 1284-amino-acid polypeptide reads, in one-letter code: Neuronal cell adhesion molecule (1284 aa).

The N-terminal stretch at 1 to 24 is a signal peptide; it reads MMKEKSISASKASLVFFLCQMISA. The Extracellular portion of the chain corresponds to 25 to 1143; that stretch reads LDVPLDSKLL…ASRQVDIATQ (1119 aa). Ig-like C2-type domains are found at residues 41–129, 136–230, 243–332, 337–424, 430–517, and 521–608; these read PTIT…AAIS, PSRS…QPIS, PPVL…ISVT, PYWI…AFVN, PRIL…VQLE, and PTMI…AVLT. Disulfide bonds link Cys-63–Cys-118 and Cys-162–Cys-213. N-linked (GlcNAc...) asparagine glycosylation is present at Asn-78. Residues Asn-218 and Asn-290 are each glycosylated (N-linked (GlcNAc...) asparagine). 2 disulfides stabilise this stretch: Cys-268-Cys-316 and Cys-358-Cys-408. Asn-409, Asn-483, Asn-576, Asn-581, Asn-595, and Asn-692 each carry an N-linked (GlcNAc...) asparagine glycan. Intrachain disulfides connect Cys-452/Cys-501 and Cys-543/Cys-592. Fibronectin type-III domains lie at 625–720, 725–819, 824–926, 930–1026, and 1040–1132; these read PPLD…TKSA, NPSN…SGED, APGN…TPEG, PPSF…IMDE, and QPLY…TGPA. The segment covering 707–731 has biased composition (polar residues); it reads QPSEPSEQYLTKSANPDENPSNVQG. A disordered region spans residues 707–732; the sequence is QPSEPSEQYLTKSANPDENPSNVQGI. N-linked (GlcNAc...) asparagine glycans are attached at residues Asn-778, Asn-834, Asn-885, Asn-969, Asn-985, Asn-995, Asn-1048, Asn-1059, and Asn-1091. A helical transmembrane segment spans residues 1144-1166; that stretch reads GWFIGLMCAVALLILILLIVCFI. At 1167 to 1284 the chain is on the cytoplasmic side; the sequence is RRNKGGKYPV…SPVNAMNSFV (118 aa). Composition is skewed to basic and acidic residues over residues 1175-1195, 1202-1212, and 1221-1230; these read PVKE…KEDD, RSLESDAEDHK, and PSDRTVKKED. The interval 1175–1284 is disordered; sequence PVKEKEDAHA…SPVNAMNSFV (110 aa). Residues 1268-1284 are compositionally biased toward polar residues; that stretch reads NESSEAPSPVNAMNSFV.

The protein belongs to the immunoglobulin superfamily. L1/neurofascin/NgCAM family. Heterodimer of an alpha and a beta chain. Retina and developing brain.

The protein resides in the cell membrane. Its function is as follows. This protein is a cell adhesion molecule involved in neuron-neuron adhesion, neurite fasciculation, outgrowth of neurites, etc. Specifically involved in the development of optic fibres in the retina. The polypeptide is Neuronal cell adhesion molecule (Gallus gallus (Chicken)).